The following is a 290-amino-acid chain: MDTILVFSLMIASYDSNKNDLRKSSCQVEQWPSFFSEDVRSNKDLVVRVPLEIHTDTKGTPFIQNQPIATLRCLGSGRRVTVHLVYSERRPKVKYIMKNLPVITDLPRNSTASPRCHLRATSQFQNGSLLTAFLPGISQCTVYSAKDRSASSEMVPITTSSTTPRSKGDEATSTGAFPNPLTQGIDMSLKRRQKWSLVVKALIAVTLLLGGAAIIVFVIFEVPCPSQCLRVRQLCQCQWLWRRKRKEEDQKPGTTESQLDSQPEKVKHNVPNSSDSKKTTDIAIIYQTYF.

The tract at residues 153 to 178 is disordered; it reads EMVPITTSSTTPRSKGDEATSTGAFP. Polar residues predominate over residues 157–178; it reads ITTSSTTPRSKGDEATSTGAFP. Residues 202 to 222 traverse the membrane as a helical segment; it reads LIAVTLLLGGAAIIVFVIFEV. Positions 246–276 are disordered; the sequence is KEEDQKPGTTESQLDSQPEKVKHNVPNSSDS. Residues 252–261 show a composition bias toward polar residues; sequence PGTTESQLDS.

The protein localises to the membrane. This is an uncharacterized protein from Mus musculus (Mouse).